An 823-amino-acid polypeptide reads, in one-letter code: Leucine--tRNA ligase (823 aa).

The 'HIGH' region signature appears at 41–51 (PYPSGTLHVGH). The 'KMSKS' region signature appears at 580-584 (KMSKS). Position 583 (Lys-583) interacts with ATP.

It belongs to the class-I aminoacyl-tRNA synthetase family.

It is found in the cytoplasm. It catalyses the reaction tRNA(Leu) + L-leucine + ATP = L-leucyl-tRNA(Leu) + AMP + diphosphate. The sequence is that of Leucine--tRNA ligase from Thermosipho melanesiensis (strain DSM 12029 / CIP 104789 / BI429).